The primary structure comprises 295 residues: NAD kinase (295 aa).

The active-site Proton acceptor is aspartate 72. NAD(+) contacts are provided by residues aspartate 72–glycine 73, asparagine 146–aspartate 147, arginine 157, lysine 174, aspartate 176, threonine 187–serine 192, and glutamine 247.

Belongs to the NAD kinase family. A divalent metal cation is required as a cofactor.

The protein resides in the cytoplasm. It catalyses the reaction NAD(+) + ATP = ADP + NADP(+) + H(+). In terms of biological role, involved in the regulation of the intracellular balance of NAD and NADP, and is a key enzyme in the biosynthesis of NADP. Catalyzes specifically the phosphorylation on 2'-hydroxyl of the adenosine moiety of NAD to yield NADP. In Pseudomonas aeruginosa (strain LESB58), this protein is NAD kinase.